We begin with the raw amino-acid sequence, 258 residues long: Transcription factor ORG3 (258 aa).

In terms of domain architecture, bHLH spans 76-128 (VKKLNHNASERDRRRKINSLFSSLRSCLPASGQSKKLSIPATVSRSLKYIPEL).

As to quaternary structure, homodimer. In terms of tissue distribution, expressed in vascular tissues. Detected in roots.

It is found in the nucleus. The sequence is that of Transcription factor ORG3 (ORG3) from Arabidopsis thaliana (Mouse-ear cress).